We begin with the raw amino-acid sequence, 230 residues long: Ion-translocating oxidoreductase complex subunit E (230 aa).

5 consecutive transmembrane segments (helical) span residues 39–59 (LGLG…VSLV), 69–89 (IPVF…LMNA), 93–113 (GLYL…IIIG), 124–144 (VLPA…VLVV), and 182–202 (AFLL…LIAA).

The protein belongs to the NqrDE/RnfAE family. As to quaternary structure, the complex is composed of six subunits: RnfA, RnfB, RnfC, RnfD, RnfE and RnfG.

The protein localises to the cell inner membrane. Functionally, part of a membrane-bound complex that couples electron transfer with translocation of ions across the membrane. This chain is Ion-translocating oxidoreductase complex subunit E, found in Vibrio cholerae serotype O1 (strain ATCC 39315 / El Tor Inaba N16961).